Reading from the N-terminus, the 713-residue chain is Pheromone-processing carboxypeptidase KEX1 (713 aa).

Residues 1 to 22 (MMVSYKLLSLITLLFVAQCTTG) form the signal peptide. Over 23-616 (LLKQDDYVVR…ESETKTHPKA (594 aa)) the chain is Lumenal. Residues Ser-196 and Asp-404 contribute to the active site. Asn-457 and Asn-465 each carry an N-linked (GlcNAc...) asparagine glycan. His-468 is an active-site residue. The interval 500-612 (DVLISTNEPT…DDKSESETKT (113 aa)) is disordered. The segment covering 512-522 (DIEEEELDGEK) has biased composition (acidic residues). A compositionally biased stretch (basic and acidic residues) spans 523–552 (EDEKDGVTEGDGEKSDTDEGKDTDKGKDEK). Over residues 553 to 601 (NDDDDDDDDDSDDDSDDDDDDDDDDDDDDDDDDDSDDDDDDDDDSDDNE) the composition is skewed to acidic residues. Positions 602 to 612 (KDDKSESETKT) are enriched in basic and acidic residues. Residues 617–637 (KIALLLLLFISVFGITGSQAL) form a helical membrane-spanning segment. Residues 638–713 (RQRNFQFRRA…IDESFELAEI (76 aa)) are Cytoplasmic-facing. Positions 650 to 696 (TSNSFSSSSSPNDPSNWDSNDDFDFDIENDPLPSTNNKHKAAKKKKD) are disordered. Residues 651 to 667 (SNSFSSSSSPNDPSNWD) show a composition bias toward low complexity. Residues 668–678 (SNDDFDFDIEN) are compositionally biased toward acidic residues. Positions 686–695 (NKHKAAKKKK) are enriched in basic residues.

This sequence belongs to the peptidase S10 family.

Its subcellular location is the golgi apparatus. It is found in the trans-Golgi network membrane. It carries out the reaction Preferential release of a C-terminal arginine or lysine residue.. Its function is as follows. Protease with a carboxypeptidase B-like function involved in the C-terminal processing of the lysine and arginine residues from protein precursors. Promotes cell fusion and is involved in the programmed cell death. In Vanderwaltozyma polyspora (strain ATCC 22028 / DSM 70294 / BCRC 21397 / CBS 2163 / NBRC 10782 / NRRL Y-8283 / UCD 57-17) (Kluyveromyces polysporus), this protein is Pheromone-processing carboxypeptidase KEX1 (KEX1).